A 370-amino-acid chain; its full sequence is Protein PAM71, chloroplastic (370 aa).

Positions 1-38 are disordered; the sequence is MLSLNLSESLRIPFQNPRPPKSDFSSTSSSPSSSSRRC. A chloroplast-targeting transit peptide spans 1-73; that stretch reads MLSLNLSESL…RNESQQLGFR (73 aa). Over residues 22 to 38 the composition is skewed to low complexity; it reads SDFSSTSSSPSSSSRRC. At 74-113 the chain is on the stromal side; that stretch reads CFQRNDAACYLEKAESEEHDRNLDVLVESSIAHSRREIQR. The helical transmembrane segment at 114 to 134 threads the bilayer; that stretch reads VLMFLAVSGSVALLGTDPAFA. The Lumenal, thylakoid portion of the chain corresponds to 135–161; sequence ASSIPNVTQSLVTSFGDLGDISSGFAS. The helical transmembrane segment at 162 to 182 threads the bilayer; sequence AFLLIFFSELGDKTFFIAALL. The Stromal portion of the chain corresponds to 183-188; the sequence is AARNSA. The chain crosses the membrane as a helical span at residues 189–209; the sequence is ATVFVGTFGALGIMTIISVVL. Residues 210-228 are Lumenal, thylakoid-facing; sequence GRTFHYVDEVLPFRFGGTD. A helical membrane pass occupies residues 229–249; it reads LPIDDIAAVCLLVYFGVSTLL. Over 250–275 the chain is Stromal; it reads DAVSDEGKADEEQKEAELAVSELSGN. Residues 276-296 traverse the membrane as a helical segment; it reads GAGIVAAANTIISTFALVFVA. The Lumenal, thylakoid portion of the chain corresponds to 297–315; it reads EWGDKSFFSTIALAAASSP. A helical membrane pass occupies residues 316 to 336; it reads LGVIAGALAGHGAATLLAVLG. Residues 337-348 lie on the Stromal side of the membrane; that stretch reads GSLLGNFLSEKA. The chain crosses the membrane as a helical span at residues 349 to 369; that stretch reads IAYVGGVLFLVFAAVTVAEIV. Residue threonine 370 is a topological domain, lumenal, thylakoid.

It belongs to the GDT1 family. Homodimer.

The protein localises to the plastid. It localises to the chloroplast membrane. It is found in the thylakoid. In terms of biological role, mn(2+)/H(+) exchanger, which transport Mn(2+)from the chloroplast stroma into the acidic thylakoid lumen. Might be a chloroplast-localized Ca(2+)/H(+) antiporter. Regulates Ca(2+), Mn(2+) and pH homeostasis. Required for chloroplast development. In Arabidopsis thaliana (Mouse-ear cress), this protein is Protein PAM71, chloroplastic.